Consider the following 842-residue polypeptide: Glycogen phosphorylase, muscle form (842 aa).

Ser2 bears the N-acetylserine mark. Position 15 is a phosphoserine; by PHK; in form phosphorylase A (Ser15). Asp43 and Tyr76 together coordinate AMP. 2 positions are modified to phosphotyrosine: Tyr204 and Tyr227. 310–319 (RRFKSSKFGC) is a binding site for AMP. Residue Ser430 is modified to Phosphoserine. The residue at position 473 (Tyr473) is a Phosphotyrosine. Position 514 is a phosphoserine (Ser514). Lys681 carries the post-translational modification N6-(pyridoxal phosphate)lysine. Phosphoserine is present on residues Ser747 and Ser748.

This sequence belongs to the glycogen phosphorylase family. In terms of assembly, homodimer. Homotetramer; to form the enzymatically active phosphorylase A. Pyridoxal 5'-phosphate is required as a cofactor. Phosphorylation of Ser-15 converts phosphorylase B (unphosphorylated) to phosphorylase A.

It carries out the reaction [(1-&gt;4)-alpha-D-glucosyl](n) + phosphate = [(1-&gt;4)-alpha-D-glucosyl](n-1) + alpha-D-glucose 1-phosphate. Allosterically regulated through the non-covalent binding of metabolites, being activated by AMP and inhibited by ATP, ADP, and glucose-6-phosphate. The activity is also controlled by post-translational modifications including phosphorylation. Its function is as follows. Allosteric enzyme that catalyzes the rate-limiting step in glycogen catabolism, the phosphorolytic cleavage of glycogen to produce glucose-1-phosphate, and plays a central role in maintaining cellular and organismal glucose homeostasis. This chain is Glycogen phosphorylase, muscle form, found in Homo sapiens (Human).